Here is a 225-residue protein sequence, read N- to C-terminus: Membrane protein (225 aa).

At 1–20 (MSNETNCTLDFEQSVELFKE) the chain is on the virion surface side. A helical membrane pass occupies residues 21 to 41 (YNLFITAFLLFLTIILQYGYA). Topologically, residues 42–51 (TRSKFIYILK) are intravirion. Residues 52–72 (MIVLWCFWPLNIAVGVISCIY) traverse the membrane as a helical segment. Topologically, residues 73 to 77 (PPNTG) are virion surface. Residues 78-98 (GLVAAIILTVFACLSFVGYWI) traverse the membrane as a helical segment. At 99 to 225 (QSIRLFKRCR…VATGGSSLYT (127 aa)) the chain is on the intravirion side.

The protein belongs to the gammacoronaviruses M protein family. In terms of assembly, homomultimer. Interacts with envelope E protein in the budding compartment of the host cell, which is located between endoplasmic reticulum and the Golgi complex. Forms a complex with HE and S proteins. Interacts with nucleocapsid N protein. This interaction probably participates in RNA packaging into the virus.

Its subcellular location is the virion membrane. The protein localises to the host Golgi apparatus membrane. Its function is as follows. Component of the viral envelope that plays a central role in virus morphogenesis and assembly via its interactions with other viral proteins. This is Membrane protein from Gallus gallus (Chicken).